Consider the following 137-residue polypeptide: Basic phospholipase A2 homolog W6D49 (137 aa).

A signal peptide spans 1–16; sequence MRTLWILAVLLVSVDG. 7 cysteine pairs are disulfide-bonded: C42-C131, C44-C60, C59-C111, C65-C137, C66-C104, C73-C97, and C91-C102. Residues 121–133 form an important for membrane-damaging activities in eukaryotes and bacteria; heparin-binding region; sequence KKQQFNTGIFCSK.

In terms of assembly, monomer. As to expression, expressed by the venom gland.

Its subcellular location is the secreted. Its activity is regulated as follows. Heparin reduces its edema-inducing activity. In terms of biological role, snake venom phospholipase A2 homolog that lacks enzymatic activity. Shows myotoxin activities and displays edema-inducing activities. A model of myotoxic mechanism has been proposed: an apo Lys49-PLA2 is activated by the entrance of a hydrophobic molecule (e.g. fatty acid) at the hydrophobic channel of the protein leading to a reorientation of a monomer. This reorientation causes a transition between 'inactive' to 'active' states, causing alignment of C-terminal and membrane-docking sites (MDoS) side-by-side and putting the membrane-disruption sites (MDiS) in the same plane, exposed to solvent and in a symmetric position for both monomers. The MDoS region stabilizes the toxin on membrane by the interaction of charged residues with phospholipid head groups. Subsequently, the MDiS region destabilizes the membrane with penetration of hydrophobic residues. This insertion causes a disorganization of the membrane, allowing an uncontrolled influx of ions (i.e. calcium and sodium), and eventually triggering irreversible intracellular alterations and cell death. In Calloselasma rhodostoma (Malayan pit viper), this protein is Basic phospholipase A2 homolog W6D49.